Here is a 517-residue protein sequence, read N- to C-terminus: Amidophosphoribosyltransferase (517 aa).

Met1 carries the post-translational modification N-acetylmethionine. A propeptide spanning residues Met1–Glu11 is cleaved from the precursor. Catalysis depends on Cys12, which acts as the Nucleophile. Positions Cys12–His261 constitute a Glutamine amidotransferase type-2 domain. Cys280 is a binding site for [4Fe-4S] cluster. Mg(2+) is bound by residues Ser327, Asp389, and Asp390. Cys426, Cys503, and Cys506 together coordinate [4Fe-4S] cluster.

In the C-terminal section; belongs to the purine/pyrimidine phosphoribosyltransferase family. Homotetramer. The cofactor is Mg(2+). [4Fe-4S] cluster serves as cofactor. As to expression, expressed at a high level in brain, heart, liver and stomach.

The catalysed reaction is 5-phospho-beta-D-ribosylamine + L-glutamate + diphosphate = 5-phospho-alpha-D-ribose 1-diphosphate + L-glutamine + H2O. It functions in the pathway purine metabolism; IMP biosynthesis via de novo pathway; N(1)-(5-phospho-D-ribosyl)glycinamide from 5-phospho-alpha-D-ribose 1-diphosphate: step 1/2. With respect to regulation, activated by the substrate 5-phospho-alpha-D-ribosyl-1-pyrophosphate and inhibited by the purine ribonucleotides, the end products of purine biosynthesis. In terms of biological role, catalyzes the formation of phosphoribosylamine from phosphoribosylpyrophosphate (PRPP) and glutamine. The chain is Amidophosphoribosyltransferase (Ppat) from Rattus norvegicus (Rat).